The sequence spans 225 residues: Cytidylate kinase (225 aa).

Residue 11–19 coordinates ATP; that stretch reads GPAAAGKST.

Belongs to the cytidylate kinase family. Type 1 subfamily.

It is found in the cytoplasm. The catalysed reaction is CMP + ATP = CDP + ADP. It catalyses the reaction dCMP + ATP = dCDP + ADP. This chain is Cytidylate kinase, found in Bacillus cereus (strain G9842).